A 112-amino-acid chain; its full sequence is Putative inner membrane protein YafU (112 aa).

The Cytoplasmic portion of the chain corresponds to 1–21 (MSSERDLVNFLGDFSMDVAKA). A helical transmembrane segment spans residues 22–42 (VIAGGVATAIGSLASFACVSF). A topological domain (periplasmic) is located at residue Gly43. A helical membrane pass occupies residues 44 to 64 (FPVILVGGAILLTGIVCTVVL). Topologically, residues 65-112 (NEIDAQCHLSEKLKYAIRDGLKRQQELDKWKRENMTPFMYVLNTPPVI) are cytoplasmic.

The protein localises to the cell inner membrane. The sequence is that of Putative inner membrane protein YafU (yafU) from Escherichia coli (strain K12).